The following is a 581-amino-acid chain: Cytosolic Fe-S cluster assembly factor nar-1 (581 aa).

Residues Cys-20, Cys-68, Cys-71, Cys-74, Cys-215, Cys-270, Cys-457, and Cys-461 each contribute to the [4Fe-4S] cluster site.

The protein belongs to the NARF family.

In terms of biological role, component of the cytosolic Fe/S protein assembly machinery. Required for maturation of extramitochondrial Fe/S proteins. May play a role in the transfer of pre-assembled Fe/S clusters to target apoproteins. The polypeptide is Cytosolic Fe-S cluster assembly factor nar-1 (nar-1) (Neurospora crassa (strain ATCC 24698 / 74-OR23-1A / CBS 708.71 / DSM 1257 / FGSC 987)).